We begin with the raw amino-acid sequence, 248 residues long: Adenosylcobinamide-GDP ribazoletransferase (248 aa).

6 helical membrane passes run 36-56 (FFLP…YLGL), 59-79 (FLPA…ITGG), 114-134 (GTIA…SLVL), 137-157 (YSIA…FLCL), 170-190 (IFIG…VLVL), and 199-219 (ATII…LLCL).

This sequence belongs to the CobS family. Requires Mg(2+) as cofactor.

It is found in the cell membrane. The catalysed reaction is alpha-ribazole + adenosylcob(III)inamide-GDP = adenosylcob(III)alamin + GMP + H(+). The enzyme catalyses alpha-ribazole 5'-phosphate + adenosylcob(III)inamide-GDP = adenosylcob(III)alamin 5'-phosphate + GMP + H(+). Its pathway is cofactor biosynthesis; adenosylcobalamin biosynthesis; adenosylcobalamin from cob(II)yrinate a,c-diamide: step 7/7. Joins adenosylcobinamide-GDP and alpha-ribazole to generate adenosylcobalamin (Ado-cobalamin). Also synthesizes adenosylcobalamin 5'-phosphate from adenosylcobinamide-GDP and alpha-ribazole 5'-phosphate. This Clostridium botulinum (strain Langeland / NCTC 10281 / Type F) protein is Adenosylcobinamide-GDP ribazoletransferase.